Reading from the N-terminus, the 80-residue chain is Conotoxin PnMKLT1-0121 (80 aa).

An N-terminal signal peptide occupies residues 1 to 22 (MKLTCMMIVAVLFLTAWTFATA). Positions 23-49 (DDPRNRLENFFSKTQHEMKNPEASKLN) are excised as a propeptide. 3 cysteine pairs are disulfide-bonded: cysteine 52/cysteine 67, cysteine 59/cysteine 71, and cysteine 66/cysteine 75.

This sequence belongs to the conotoxin O1 superfamily. Expressed by the venom duct.

The protein localises to the secreted. The chain is Conotoxin PnMKLT1-0121 from Conus pennaceus (Feathered cone).